The following is a 157-amino-acid chain: SsrA-binding protein (157 aa).

Belongs to the SmpB family.

The protein localises to the cytoplasm. Required for rescue of stalled ribosomes mediated by trans-translation. Binds to transfer-messenger RNA (tmRNA), required for stable association of tmRNA with ribosomes. tmRNA and SmpB together mimic tRNA shape, replacing the anticodon stem-loop with SmpB. tmRNA is encoded by the ssrA gene; the 2 termini fold to resemble tRNA(Ala) and it encodes a 'tag peptide', a short internal open reading frame. During trans-translation Ala-aminoacylated tmRNA acts like a tRNA, entering the A-site of stalled ribosomes, displacing the stalled mRNA. The ribosome then switches to translate the ORF on the tmRNA; the nascent peptide is terminated with the 'tag peptide' encoded by the tmRNA and targeted for degradation. The ribosome is freed to recommence translation, which seems to be the essential function of trans-translation. The chain is SsrA-binding protein from Elusimicrobium minutum (strain Pei191).